We begin with the raw amino-acid sequence, 206 residues long: Putative apoptosis inhibitor 021L (206 aa).

A compositionally biased stretch (polar residues) spans 95 to 105; that stretch reads TSKSPVSNQPS. A disordered region spans residues 95 to 114; the sequence is TSKSPVSNQPSPEEDEPIPD. An RING-type zinc finger spans residues 157 to 195; the sequence is CVVCQANVRNVVFVPCNHLATCISCSANPLMPKKCPMCR.

The protein belongs to the IIV-6 193R family.

In terms of biological role, plays a role early in infection by preventing host cell apoptosis. The polypeptide is Putative apoptosis inhibitor 021L (Aedes vexans (Inland floodwater mosquito)).